The primary structure comprises 82 residues: Putative membrane protein insertion efficiency factor (82 aa).

The protein belongs to the UPF0161 family.

It localises to the cell inner membrane. Functionally, could be involved in insertion of integral membrane proteins into the membrane. This chain is Putative membrane protein insertion efficiency factor, found in Aeromonas salmonicida (strain A449).